Reading from the N-terminus, the 112-residue chain is Transmembrane protein 14C (112 aa).

The next 4 helical transmembrane spans lie at 7–27 (VVPL…GGII), 32–52 (AGSV…SLGA), 62–82 (VWVF…RFYH), and 86–106 (FMPA…VGVS).

It belongs to the TMEM14 family.

The protein resides in the mitochondrion membrane. Functionally, required for normal heme biosynthesis. In Pongo abelii (Sumatran orangutan), this protein is Transmembrane protein 14C (TMEM14C).